The chain runs to 151 residues: UPF0178 protein YaiI (151 aa).

Belongs to the UPF0178 family.

This is UPF0178 protein YaiI from Salmonella paratyphi B (strain ATCC BAA-1250 / SPB7).